The sequence spans 123 residues: Small ribosomal subunit protein uS12 (123 aa).

A 3-methylthioaspartic acid modification is found at Asp89.

It belongs to the universal ribosomal protein uS12 family. In terms of assembly, part of the 30S ribosomal subunit. Contacts proteins S8 and S17. May interact with IF1 in the 30S initiation complex.

With S4 and S5 plays an important role in translational accuracy. Its function is as follows. Interacts with and stabilizes bases of the 16S rRNA that are involved in tRNA selection in the A site and with the mRNA backbone. Located at the interface of the 30S and 50S subunits, it traverses the body of the 30S subunit contacting proteins on the other side and probably holding the rRNA structure together. The combined cluster of proteins S8, S12 and S17 appears to hold together the shoulder and platform of the 30S subunit. This chain is Small ribosomal subunit protein uS12, found in Anaeromyxobacter sp. (strain Fw109-5).